A 154-amino-acid chain; its full sequence is Large ribosomal subunit protein uL15 (154 aa).

Residues methionine 1–arginine 13 are compositionally biased toward basic and acidic residues. Residues methionine 1–glycine 52 form a disordered region.

Belongs to the universal ribosomal protein uL15 family. Part of the 50S ribosomal subunit.

In terms of biological role, binds to the 23S rRNA. The sequence is that of Large ribosomal subunit protein uL15 from Deinococcus deserti (strain DSM 17065 / CIP 109153 / LMG 22923 / VCD115).